The sequence spans 511 residues: ATP synthase subunit alpha (511 aa).

169–176 is an ATP binding site; the sequence is GDRQTGKT.

The protein belongs to the ATPase alpha/beta chains family. As to quaternary structure, F-type ATPases have 2 components, CF(1) - the catalytic core - and CF(0) - the membrane proton channel. CF(1) has five subunits: alpha(3), beta(3), gamma(1), delta(1), epsilon(1). CF(0) has three main subunits: a(1), b(2) and c(9-12). The alpha and beta chains form an alternating ring which encloses part of the gamma chain. CF(1) is attached to CF(0) by a central stalk formed by the gamma and epsilon chains, while a peripheral stalk is formed by the delta and b chains.

It is found in the cell inner membrane. The enzyme catalyses ATP + H2O + 4 H(+)(in) = ADP + phosphate + 5 H(+)(out). Its function is as follows. Produces ATP from ADP in the presence of a proton gradient across the membrane. The alpha chain is a regulatory subunit. The chain is ATP synthase subunit alpha from Bartonella tribocorum (strain CIP 105476 / IBS 506).